Consider the following 128-residue polypeptide: SH2 domain-containing protein 1A (128 aa).

The SH2 domain occupies 6-102; the sequence is VYHGKISRET…GIVIPLQYPV (97 aa). The tract at residues 67–92 is interaction with FYN SH3 domain; it reads ETAPGVHKRYFRKIKNLISAFQKPDQ. Lys89 is subject to N6-acetyllysine. The disordered stretch occupies residues 106 to 128; sequence SSARSTQGTTGIREDPDVCLKAP. A compositionally biased stretch (basic and acidic residues) spans 117–128; that stretch reads IREDPDVCLKAP.

Interacts with CD84, CD244, LY9, SLAMF1 and FYN. Interacts with NTRK1, NTRK2 and NTRK3.

It is found in the cytoplasm. Cytoplasmic adapter regulating receptors of the signaling lymphocytic activation molecule (SLAM) family such as SLAMF1, CD244, LY9, CD84, SLAMF6 and SLAMF7. In SLAM signaling seems to cooperate with SH2D1B/EAT-2. Initially it has been proposed that association with SLAMF1 prevents SLAMF1 binding to inhibitory effectors including INPP5D/SHIP1 and PTPN11/SHP-2. However, by simultaneous interactions, recruits FYN which subsequently phosphorylates and activates SLAMF1. Positively regulates CD244/2B4- and CD84-mediated natural killer (NK) cell functions. Can also promote CD48-, SLAMF6 -, LY9-, and SLAMF7-mediated NK cell activation. In the context of NK cell-mediated cytotoxicity enhances conjugate formation with target cells. May also regulate the activity of the neurotrophin receptors NTRK1, NTRK2 and NTRK3. The polypeptide is SH2 domain-containing protein 1A (SH2D1A) (Macaca mulatta (Rhesus macaque)).